The sequence spans 695 residues: Threonine--tRNA ligase 1, cytoplasmic (695 aa).

Positions M1–P21 are disordered. Positions D51–K115 constitute a TGS domain. Position 215 is an N6-acetyllysine (K215). Residue T218 is modified to Phosphothreonine. Y270 is subject to Phosphotyrosine. Residue T425 is modified to Phosphothreonine.

Belongs to the class-II aminoacyl-tRNA synthetase family. Homodimer. ISGylated.

It localises to the cytoplasm. It carries out the reaction tRNA(Thr) + L-threonine + ATP = L-threonyl-tRNA(Thr) + AMP + diphosphate + H(+). In terms of biological role, catalyzes the attachment of threonine to tRNA(Thr) in a two-step reaction: threonine is first activated by ATP to form Thr-AMP and then transferred to the acceptor end of tRNA(Thr). Also edits incorrectly charged tRNA(Thr) via its editing domain, at the post-transfer stage. The chain is Threonine--tRNA ligase 1, cytoplasmic (Tars1) from Rattus norvegicus (Rat).